The primary structure comprises 157 residues: MKEELVVRRISDGTVIDHIPAGRALRVLKLLGITGERDGVVALVMNVPSKKLGKKDIVKIEGRELSKEEVDKISLIAPSATINIIRNFEVASKRRVELPRRVVGILRCLNPNCVTNAPREAVEPSFTLISESPLRMVCEYCGEYLREEDIIEQLSGV.

Cysteine 108, cysteine 113, cysteine 138, and cysteine 141 together coordinate Zn(2+).

The protein belongs to the PyrI family. Contains catalytic and regulatory chains. Zn(2+) is required as a cofactor.

In terms of biological role, involved in allosteric regulation of aspartate carbamoyltransferase. In Korarchaeum cryptofilum (strain OPF8), this protein is Aspartate carbamoyltransferase regulatory chain.